The chain runs to 115 residues: Non-specific lipid-transfer protein Cor a 8.0101 (115 aa).

An N-terminal signal peptide occupies residues 1-23 (MGSLKLVCAVLLCMMVAAPVARA). Disulfide bonds link Cys-27–Cys-74, Cys-37–Cys-51, Cys-52–Cys-97, and Cys-72–Cys-111.

It belongs to the plant LTP family. Monomer. Expressed in seed (at protein level). Expressed in seed.

Functionally, plant non-specific lipid-transfer proteins transfer phospholipids as well as galactolipids across membranes. May play a role in wax or cutin deposition in the cell walls of expanding epidermal cells and certain secretory tissues. The chain is Non-specific lipid-transfer protein Cor a 8.0101 from Corylus avellana (European hazel).